We begin with the raw amino-acid sequence, 500 residues long: Oryzalexin D synthase (500 aa).

A helical transmembrane segment spans residues 4 to 24 (SQMWLLWGALSVALFFYFSTL). Cys-442 contacts heme.

The protein belongs to the cytochrome P450 family. Heme serves as cofactor.

It localises to the membrane. It carries out the reaction ent-cassa-12,15-diene + reduced [NADPH--hemoprotein reductase] + O2 = ent-11beta-hydroxycassa-12,15-diene + oxidized [NADPH--hemoprotein reductase] + H2O + H(+). The enzyme catalyses ent-sandaracopimaradien-3beta-ol + reduced [NADPH--hemoprotein reductase] + O2 = oryzalexin D + oxidized [NADPH--hemoprotein reductase] + H2O + H(+). Functionally, enzyme of the diterpenoid metabolism involved in the biosynthesis of both phytocassane and the oryzalexin class of phytoalexins. Can hydroxylate syn-pimaradiene, ent-pimaradiene, ent-sandaracopimaradiene, ent-isokaurene, ent-kaurene, and ent-cassadiene, but no activity with syn-stemodene, syn-stemarene, syn-labdatriene, C11-alpha-hydroxy-ent-cassadiene or syn-pimadien-19-oic acid as substrates. Hydroxylates 3-alpha-hydroxy-ent-sandaracopimaradiene at C-7-beta, resulting in a 3-alpha,7-beta-diol corresponding to oryzalexins D. This chain is Oryzalexin D synthase, found in Oryza sativa subsp. japonica (Rice).